We begin with the raw amino-acid sequence, 582 residues long: DNA mismatch repair protein MutL (582 aa).

It belongs to the DNA mismatch repair MutL/HexB family.

In terms of biological role, this protein is involved in the repair of mismatches in DNA. It is required for dam-dependent methyl-directed DNA mismatch repair. May act as a 'molecular matchmaker', a protein that promotes the formation of a stable complex between two or more DNA-binding proteins in an ATP-dependent manner without itself being part of a final effector complex. This Chlamydia abortus (strain DSM 27085 / S26/3) (Chlamydophila abortus) protein is DNA mismatch repair protein MutL.